The following is a 623-amino-acid chain: V-type proton ATPase catalytic subunit A (623 aa).

252-259 (GAFGCGKT) is a binding site for ATP.

It belongs to the ATPase alpha/beta chains family. In terms of assembly, V-ATPase is a heteromultimeric enzyme composed of a peripheral catalytic V1 complex (main components: subunits A, B, C, D, E, and F) attached to an integral membrane V0 proton pore complex (main component: the proteolipid protein).

The enzyme catalyses ATP + H2O + 4 H(+)(in) = ADP + phosphate + 5 H(+)(out). Its function is as follows. Catalytic subunit of the peripheral V1 complex of vacuolar ATPase. V-ATPase vacuolar ATPase is responsible for acidifying a variety of intracellular compartments in eukaryotic cells. In Brassica napus (Rape), this protein is V-type proton ATPase catalytic subunit A.